The sequence spans 1198 residues: Fibronectin type-III domain-containing protein 3a (1198 aa).

Over residues 189 to 201 the composition is skewed to basic and acidic residues; it reads KLKDRHGTQKDKL. Residues 189 to 256 are disordered; sequence KLKDRHGTQK…SQTDVEIEEK (68 aa). A compositionally biased stretch (low complexity) spans 229-247; it reads GISTGSTKSKSVGKGKSNS. Fibronectin type-III domains are found at residues 269–370, 374–466, 470–563, 567–661, 665–758, 762–852, 864–951, 952–1045, and 1046–1151; these read NIAK…TMSC, APNL…TSGT, TPAS…TCPD, APSK…TPAV, PCQP…TAPG, QCKP…TPAS, SEDE…TKPL, PPDP…TPKS, and VPAA…TEPP. The interval 553–574 is disordered; sequence SETVDYTTCPDKPGAPSKPSVK. The chain crosses the membrane as a helical span at residues 1172-1192; sequence VCAAVILALFAIFSILIAVII.

Belongs to the FNDC3 family.

It is found in the golgi apparatus membrane. The polypeptide is Fibronectin type-III domain-containing protein 3a (FNDC3A) (Gallus gallus (Chicken)).